The chain runs to 2049 residues: Polyglutamine-repeat protein pqn-41 (2049 aa).

A disordered region spans residues 1-58 (MKPKKLQQGSDSAHTSDTESTKTCEKTAKKLPKTQKKLQKSKKTAKKRRDEEFRIFFP). The sufficient to prevent linker cell death stretch occupies residues 1–1601 (MKPKKLQQGS…TTSQHQQSIQ (1601 aa)). Residues 14 to 28 (HTSDTESTKTCEKTA) show a composition bias toward basic and acidic residues. Residues 29–47 (KKLPKTQKKLQKSKKTAKK) are compositionally biased toward basic residues. Coiled coils occupy residues 264–302 (RRQE…ANSD) and 396–432 (TNAG…DRNH). Residues 459 to 492 (RGRNSTENSDSESSSEASEPPDDVITKEEPTDFS) are disordered. The span at 463 to 476 (STENSDSESSSEAS) shows a compositional bias: low complexity. 3 coiled-coil regions span residues 686–730 (ESFE…SFET), 756–796 (ISAD…REFS), and 822–880 (QSSI…ARKL). The segment covering 1134-1150 (QQQHNHQNFQQQQQGNH) has biased composition (low complexity). Disordered regions lie at residues 1134 to 1198 (QQQH…ENAA), 1236 to 1265 (AAAA…QQQN), 1481 to 1616 (YKQS…GAAY), and 1636 to 1661 (ATPK…TSQA). Over residues 1162–1171 (QKRKYTKRKA) the composition is skewed to basic residues. The span at 1176–1194 (AVASSSDQNGMKSPGSSAM) shows a compositional bias: polar residues. Positions 1495–1533 (STSSSSAAPASAPAPRAGAGAGATSSSAASSSTSTPSSS) are enriched in low complexity. A compositionally biased stretch (basic residues) spans 1534-1546 (SHHKKSSPPHHQK). 2 stretches are compositionally biased toward low complexity: residues 1569–1604 (SAPI…QFSQ) and 1649–1661 (ATQQ…TSQA). Coiled coils occupy residues 1659-1685 (SQAS…AAAA) and 1725-1801 (QQYL…LQNI). A disordered region spans residues 1836–1858 (AQAQQAPPTSQPSQAATPQQQQQ). Coiled coils occupy residues 1863-1961 (RQME…AAAA) and 1991-2041 (SAQQ…AQQK).

In terms of tissue distribution, expressed in the linker cell just before it dies.

The protein localises to the cytoplasm. In terms of biological role, in males, required for non-apoptotic death of the linker cell once it has finished guiding gonad elongation at the end of larval development. May be involved in nuclear envelope crenellation in the linker cell. In males, promotes linker cell survival. The polypeptide is Polyglutamine-repeat protein pqn-41 (Caenorhabditis elegans).